Consider the following 67-residue polypeptide: UPF0181 protein KPK_1966 (67 aa).

The disordered stretch occupies residues 48–67 (EQIVARFEDEDEDQDEDEDD). Residues 55–67 (EDEDEDQDEDEDD) show a composition bias toward acidic residues.

Belongs to the UPF0181 family.

This Klebsiella pneumoniae (strain 342) protein is UPF0181 protein KPK_1966.